We begin with the raw amino-acid sequence, 1343 residues long: DNA-directed RNA polymerase subunit beta (1343 aa).

It belongs to the RNA polymerase beta chain family. In terms of assembly, the RNAP catalytic core consists of 2 alpha, 1 beta, 1 beta' and 1 omega subunit. When a sigma factor is associated with the core the holoenzyme is formed, which can initiate transcription.

The enzyme catalyses RNA(n) + a ribonucleoside 5'-triphosphate = RNA(n+1) + diphosphate. DNA-dependent RNA polymerase catalyzes the transcription of DNA into RNA using the four ribonucleoside triphosphates as substrates. In Shewanella pealeana (strain ATCC 700345 / ANG-SQ1), this protein is DNA-directed RNA polymerase subunit beta.